The primary structure comprises 885 residues: Dual serine/threonine and tyrosine protein kinase (885 aa).

Residues 614–868 enclose the Protein kinase domain; that stretch reads PKLGRELGRG…PLLGIVQPGL (255 aa). Residues 620–628 and lysine 643 each bind ATP; that span reads LGRGQYGVV. Aspartate 739 functions as the Proton acceptor in the catalytic mechanism.

Belongs to the protein kinase superfamily. Ser/Thr protein kinase family.

The protein resides in the cytoplasm. It localises to the cell membrane. It is found in the apical cell membrane. Its subcellular location is the basolateral cell membrane. The protein localises to the cell junction. It catalyses the reaction L-seryl-[protein] + ATP = O-phospho-L-seryl-[protein] + ADP + H(+). The enzyme catalyses L-threonyl-[protein] + ATP = O-phospho-L-threonyl-[protein] + ADP + H(+). It carries out the reaction L-tyrosyl-[protein] + ATP = O-phospho-L-tyrosyl-[protein] + ADP + H(+). May act as a positive regulator of ERK phosphorylation downstream of fibroblast growth factor-receptor activation. May induce both caspase-dependent apoptosis and caspase-independent cell death. Plays a role in the embryonic development. The chain is Dual serine/threonine and tyrosine protein kinase (dstyk) from Danio rerio (Zebrafish).